We begin with the raw amino-acid sequence, 249 residues long: Low affinity immunoglobulin gamma Fc region receptor III-A (249 aa).

Residues 1–20 (MWYLLLPTALLLTVSSGVGA) form the signal peptide. Topologically, residues 21 to 203 (GLQKAVVNLD…SPSSFLPWHQ (183 aa)) are extracellular. Ig-like C2-type domains follow at residues 31-103 (PEWV…QLDV) and 117-188 (FQEG…LQIS). 2 disulfide bridges follow: C46-C88 and C127-C171. N55 and N62 each carry an N-linked (GlcNAc...) asparagine glycan. N179 carries an N-linked (GlcNAc...) asparagine glycan. A helical transmembrane segment spans residues 204-224 (ITFCLLIGLLFAIDTVLYFSV). Residues 225–249 (QRSLQSSVAVYEEPKLHWSKEPQDK) are Cytoplasmic-facing. Y235 bears the Phosphotyrosine mark.

Forms a heterooligomeric complex with ITAM-containing signaling subunits FCER1G. Interacts (via transmembrane domain) with signaling subunits; this interaction is a prerequisite for receptor complex expression on the cell surface and intracellular signal transduction. Binds the Fc region of antigen-complexed IgG. In terms of processing, N-glycosylated. Post-translationally, phosphorylated following receptor ligation.

It is found in the cell membrane. Functionally, receptor for the invariable Fc fragment of immunoglobulin gamma (IgG). Binds with intermediate affinity to both IgG2a and IgG2b. Can bind to IgG2a and IgG2b monomers. Does not display binding to IgG1 or IgG3. Recognizes neutralizing virus-specific IgGs displayed on the cell surface of infected cells and triggers antibody-dependent cellular cytotoxicity (ADCC). Confers protection to lethal influenza virus infection. On splenic dendritic cells, uptakes antigen immune complexes and efficiently divert them into MHC class I and II antigen presentation pathways to provide for superior priming of CD4-positive and CD8-positive T cell immune responses. Mediates neutrophil activation by IgG complexes redundantly with FCGR2A. Plays a role in promoting bone resorption by enhancing osteoclast differentiation following binding to IgG2a. Also acts as a receptor for the Fc region of immunoglobulin epsilon (IgE). Binds with low affinity to both the a and b allotypes of IgE. Has also been shown to bind to IgE allotype a only but not to allotype b. Binds aggregated IgE but not the monomeric form and bound monomeric IgG is readily displaced by IgE complexes. Binding to IgE promotes macrophage-mediated phagocytosis, antigen presentation to T cells, production of pro-inflammatory cytokines and the late phase of cutaneous allergic reactions. Mediates enhanced ADCC in response to afucosylated IgGs. In Rattus norvegicus (Rat), this protein is Low affinity immunoglobulin gamma Fc region receptor III-A.